The chain runs to 387 residues: TSC22 domain family protein 4 (387 aa).

2 disordered regions span residues 1–85 and 135–232; these read MSGG…GEPY and ISTP…RRDG. The segment covering 31-51 has biased composition (pro residues); it reads PVPPALAGPPPRLPNGDPNPD. A Phosphothreonine modification is found at T57. S62 and S165 each carry phosphoserine. Residue T183 is modified to Phosphothreonine. S187, S189, and S219 each carry phosphoserine. Phosphothreonine is present on T223. 3 positions are modified to phosphoserine: S254, S258, and S271. The tract at residues 336–357 is leucine-zipper; sequence LKEQIRDLAERNAALEQENGLL. Phosphoserine is present on S362. The disordered stretch occupies residues 368-387; sequence QLPSSGLPRLGPSAPNGPSI.

The protein belongs to the TSC-22/Dip/Bun family. In terms of assembly, forms a homodimer or heterodimer. Forms a heterodimer with TSC22D1 isoforms 1 and 2. Interacts with NRBP1. In terms of tissue distribution, expressed in the liver (at protein level). Expressed in Purkinje cells and proliferating cerebellar granular neurons (at protein level). Expressed in the cortex, medulla and papilla of the kidney.

Its subcellular location is the nucleus. The protein resides in the cytoplasm. The protein localises to the cell projection. It localises to the dendrite. It is found in the synapse. Functionally, binds DNA and acts as a transcriptional repressor. Involved in the regulation of systematic glucose homeostasis and insulin sensitivity, via transcriptional repression of downstream insulin signaling targets such as OBP2A/LCN13. Acts as a negative regulator of lipogenic gene expression in hepatocytes and thereby mediates the control of very low-density lipoprotein release. May play a role in neurite elongation and survival. The chain is TSC22 domain family protein 4 from Mus musculus (Mouse).